A 102-amino-acid polypeptide reads, in one-letter code: uncharacterized protein (102 aa).

A disordered region spans residues 79–102 (AELLHPSPAPMPPATHGRSAAPCS).

This is an uncharacterized protein from Homo sapiens (Human).